A 221-amino-acid chain; its full sequence is PKHD-type hydroxylase NATL1_16191 (221 aa).

In terms of domain architecture, Fe2OG dioxygenase spans leucine 80–serine 174. Fe cation-binding residues include histidine 98, aspartate 100, and histidine 155. Arginine 165 contributes to the 2-oxoglutarate binding site.

Requires Fe(2+) as cofactor. L-ascorbate serves as cofactor.

This chain is PKHD-type hydroxylase NATL1_16191, found in Prochlorococcus marinus (strain NATL1A).